The sequence spans 427 residues: 3-phosphoshikimate 1-carboxyvinyltransferase (427 aa).

3-phosphoshikimate-binding residues include Lys-22, Ser-23, and Arg-27. Lys-22 contributes to the phosphoenolpyruvate binding site. Gly-93 and Arg-122 together coordinate phosphoenolpyruvate. 3-phosphoshikimate-binding residues include Ser-167, Gln-169, Asp-315, and Lys-342. Gln-169 is a phosphoenolpyruvate binding site. Catalysis depends on Asp-315, which acts as the Proton acceptor. Arg-346 and Arg-387 together coordinate phosphoenolpyruvate.

This sequence belongs to the EPSP synthase family. Monomer.

It localises to the cytoplasm. The enzyme catalyses 3-phosphoshikimate + phosphoenolpyruvate = 5-O-(1-carboxyvinyl)-3-phosphoshikimate + phosphate. It participates in metabolic intermediate biosynthesis; chorismate biosynthesis; chorismate from D-erythrose 4-phosphate and phosphoenolpyruvate: step 6/7. Functionally, catalyzes the transfer of the enolpyruvyl moiety of phosphoenolpyruvate (PEP) to the 5-hydroxyl of shikimate-3-phosphate (S3P) to produce enolpyruvyl shikimate-3-phosphate and inorganic phosphate. This Thermus thermophilus (strain ATCC BAA-163 / DSM 7039 / HB27) protein is 3-phosphoshikimate 1-carboxyvinyltransferase.